Here is a 557-residue protein sequence, read N- to C-terminus: Dihydroxy-acid dehydratase (557 aa).

Mg(2+) is bound at residue aspartate 78. Cysteine 119 contacts [2Fe-2S] cluster. Residues aspartate 120 and lysine 121 each coordinate Mg(2+). N6-carboxylysine is present on lysine 121. Cysteine 192 is a [2Fe-2S] cluster binding site. Glutamate 443 serves as a coordination point for Mg(2+). Catalysis depends on serine 469, which acts as the Proton acceptor.

This sequence belongs to the IlvD/Edd family. As to quaternary structure, homodimer. Requires [2Fe-2S] cluster as cofactor. Mg(2+) is required as a cofactor.

It carries out the reaction (2R)-2,3-dihydroxy-3-methylbutanoate = 3-methyl-2-oxobutanoate + H2O. The catalysed reaction is (2R,3R)-2,3-dihydroxy-3-methylpentanoate = (S)-3-methyl-2-oxopentanoate + H2O. It functions in the pathway amino-acid biosynthesis; L-isoleucine biosynthesis; L-isoleucine from 2-oxobutanoate: step 3/4. It participates in amino-acid biosynthesis; L-valine biosynthesis; L-valine from pyruvate: step 3/4. Functions in the biosynthesis of branched-chain amino acids. Catalyzes the dehydration of (2R,3R)-2,3-dihydroxy-3-methylpentanoate (2,3-dihydroxy-3-methylvalerate) into 2-oxo-3-methylpentanoate (2-oxo-3-methylvalerate) and of (2R)-2,3-dihydroxy-3-methylbutanoate (2,3-dihydroxyisovalerate) into 2-oxo-3-methylbutanoate (2-oxoisovalerate), the penultimate precursor to L-isoleucine and L-valine, respectively. This is Dihydroxy-acid dehydratase from Sulfurihydrogenibium sp. (strain YO3AOP1).